A 361-amino-acid polypeptide reads, in one-letter code: Thymidine kinase (361 aa).

17 to 24 (GPHGVGKS) contacts ATP. The Proton acceptor role is filled by Glu46. Tyr64 and Gln88 together coordinate substrate. Arg184 is an ATP binding site. Position 190 (Arg190) interacts with substrate.

This sequence belongs to the herpesviridae thymidine kinase family. Homodimer.

The catalysed reaction is thymidine + ATP = dTMP + ADP + H(+). In terms of biological role, catalyzes the transfer of the gamma-phospho group of ATP to thymidine to generate dTMP in the salvage pathway of pyrimidine synthesis. The dTMP serves as a substrate for DNA polymerase during viral DNA replication. Allows the virus to be reactivated and to grow in non-proliferative cells lacking a high concentration of phosphorylated nucleic acid precursors. This Saimiriine herpesvirus 1 (strain MV-5-4-PSL) (SaHV-1) protein is Thymidine kinase.